The chain runs to 398 residues: Arginine biosynthesis bifunctional protein ArgJ (398 aa).

Substrate is bound by residues T148, K174, T185, E271, N393, and T398. The active-site Nucleophile is T185.

It belongs to the ArgJ family. In terms of assembly, heterotetramer of two alpha and two beta chains.

The protein resides in the cytoplasm. The enzyme catalyses N(2)-acetyl-L-ornithine + L-glutamate = N-acetyl-L-glutamate + L-ornithine. It carries out the reaction L-glutamate + acetyl-CoA = N-acetyl-L-glutamate + CoA + H(+). It participates in amino-acid biosynthesis; L-arginine biosynthesis; L-ornithine and N-acetyl-L-glutamate from L-glutamate and N(2)-acetyl-L-ornithine (cyclic): step 1/1. The protein operates within amino-acid biosynthesis; L-arginine biosynthesis; N(2)-acetyl-L-ornithine from L-glutamate: step 1/4. In terms of biological role, catalyzes two activities which are involved in the cyclic version of arginine biosynthesis: the synthesis of N-acetylglutamate from glutamate and acetyl-CoA as the acetyl donor, and of ornithine by transacetylation between N(2)-acetylornithine and glutamate. This chain is Arginine biosynthesis bifunctional protein ArgJ, found in Listeria monocytogenes serotype 4b (strain F2365).